The chain runs to 829 residues: Periplasmic nitrate reductase (829 aa).

A signal peptide (tat-type signal) is located at residues 1-29 (MKMTRRAFVKANAAASAAAVAGITLPASA). Residues 41–97 (ITWDKAPCRFCGTGCSVLVGTQNGKVVATQGDPEAPVNKGLNCIKGYFLSKIMYGQD) enclose the 4Fe-4S Mo/W bis-MGD-type domain. The [4Fe-4S] cluster site is built by Cys48, Cys51, Cys55, and Cys83. Mo-bis(molybdopterin guanine dinucleotide)-binding positions include Lys85, Gln152, Asn177, Cys181, 214–221 (WGSNMAEM), 245–249 (STYYH), 264–266 (QSD), Met374, Gln378, Asn484, 510–511 (SD), Lys533, Asp560, and 718–727 (TGRVLEHWHT). Phe794 contributes to the substrate binding site. 2 residues coordinate Mo-bis(molybdopterin guanine dinucleotide): Asn802 and Lys819.

This sequence belongs to the prokaryotic molybdopterin-containing oxidoreductase family. NasA/NapA/NarB subfamily. In terms of assembly, component of the periplasmic nitrate reductase NapAB complex composed of NapA and NapB. [4Fe-4S] cluster is required as a cofactor. Mo-bis(molybdopterin guanine dinucleotide) serves as cofactor. Post-translationally, predicted to be exported by the Tat system. The position of the signal peptide cleavage has not been experimentally proven.

The protein localises to the periplasm. The enzyme catalyses 2 Fe(II)-[cytochrome] + nitrate + 2 H(+) = 2 Fe(III)-[cytochrome] + nitrite + H2O. Its function is as follows. Catalytic subunit of the periplasmic nitrate reductase complex NapAB. Receives electrons from NapB and catalyzes the reduction of nitrate to nitrite. This is Periplasmic nitrate reductase from Vibrio campbellii (strain ATCC BAA-1116).